We begin with the raw amino-acid sequence, 185 residues long: MIDDTLLEAEEKMEKAIEVAKGDFGAIRTGRANAAMFHKIMVDYYGAPTPLQQLASFQIPEARSVLITPFDRAAMSEIEKALRNSDLGVNPGNDGNVIRIVLPQLTEERRKDYIKIARTKAEDARVSLRNVRRRAKEELDRIVKDGEAGEDEVGRAEKELEAVTKKHVDAIDELLKNKEAELLAV.

Belongs to the RRF family.

It is found in the cytoplasm. Its function is as follows. Responsible for the release of ribosomes from messenger RNA at the termination of protein biosynthesis. May increase the efficiency of translation by recycling ribosomes from one round of translation to another. This is Ribosome-recycling factor from Kineococcus radiotolerans (strain ATCC BAA-149 / DSM 14245 / SRS30216).